The chain runs to 253 residues: MQTHFIITSPLEQFEIVTIFPFSISGLNFSLTNSSLFLIIAVFLLLFWTSLSFYSNTLIPNNWQLVKESIYEITASMVQDNLGSKGEFYFPFIFTLHLLLLYCNLIGMIPYSFTVTSHIVFTFGLALSIFIGINLIGIQTHGFKFFALFLPRGVPLAIVPLLITIEFLSYIVKVFTLSIRLFANMTSGHTLLKIIAGFAWTMLSAGGLLAIFHLIPLALLLALTGLELAIAGLQAYVFTLLTCIYLNDVLDMH.

6 helical membrane-spanning segments follow: residues 34–54 (SSLF…LSFY), 89–109 (YFPF…IGMI), 118–138 (HIVF…LIGI), 156–178 (LAIV…FTLS), 203–223 (LSAG…LLAL), and 226–246 (LELA…CIYL).

Belongs to the ATPase A chain family. As to quaternary structure, F-type ATPases have 2 components, CF(1) - the catalytic core - and CF(0) - the membrane proton channel. CF(1) has five subunits: alpha(3), beta(3), gamma(1), delta(1), epsilon(1). CF(0) has three main subunits: a, b and c.

Its subcellular location is the mitochondrion inner membrane. Mitochondrial membrane ATP synthase (F(1)F(0) ATP synthase or Complex V) produces ATP from ADP in the presence of a proton gradient across the membrane which is generated by electron transport complexes of the respiratory chain. F-type ATPases consist of two structural domains, F(1) - containing the extramembraneous catalytic core and F(0) - containing the membrane proton channel, linked together by a central stalk and a peripheral stalk. During catalysis, ATP synthesis in the catalytic domain of F(1) is coupled via a rotary mechanism of the central stalk subunits to proton translocation. Key component of the proton channel; it may play a direct role in the translocation of protons across the membrane. The chain is ATP synthase subunit a (ATP6) from Chondrus crispus (Carrageen Irish moss).